A 336-amino-acid polypeptide reads, in one-letter code: Holliday junction branch migration complex subunit RuvB (336 aa).

The interval 1–180 (MRRTGIRLSW…FGIVEHLEYY (180 aa)) is large ATPase domain (RuvB-L). Residues Leu-18, Arg-19, Gly-60, Lys-63, Thr-64, Thr-65, 127–129 (EDF), Arg-170, Tyr-180, and Arg-217 each bind ATP. Thr-64 contacts Mg(2+). The segment at 181–251 (TPEELAQGVM…RALEALAALG (71 aa)) is small ATPAse domain (RuvB-S). The interval 254 to 336 (ELGLEKRDRE…PPPVGPLLEP (83 aa)) is head domain (RuvB-H). DNA is bound by residues Arg-309 and Arg-314.

Belongs to the RuvB family. Homohexamer. Forms an RuvA(8)-RuvB(12)-Holliday junction (HJ) complex. HJ DNA is sandwiched between 2 RuvA tetramers; dsDNA enters through RuvA and exits via RuvB. An RuvB hexamer assembles on each DNA strand where it exits the tetramer. Each RuvB hexamer is contacted by two RuvA subunits (via domain III) on 2 adjacent RuvB subunits; this complex drives branch migration. In the full resolvosome a probable DNA-RuvA(4)-RuvB(12)-RuvC(2) complex forms which resolves the HJ.

It is found in the cytoplasm. The catalysed reaction is ATP + H2O = ADP + phosphate + H(+). Functionally, the RuvA-RuvB-RuvC complex processes Holliday junction (HJ) DNA during genetic recombination and DNA repair, while the RuvA-RuvB complex plays an important role in the rescue of blocked DNA replication forks via replication fork reversal (RFR). RuvA specifically binds to HJ cruciform DNA, conferring on it an open structure. The RuvB hexamer acts as an ATP-dependent pump, pulling dsDNA into and through the RuvAB complex. RuvB forms 2 homohexamers on either side of HJ DNA bound by 1 or 2 RuvA tetramers; 4 subunits per hexamer contact DNA at a time. Coordinated motions by a converter formed by DNA-disengaged RuvB subunits stimulates ATP hydrolysis and nucleotide exchange. Immobilization of the converter enables RuvB to convert the ATP-contained energy into a lever motion, pulling 2 nucleotides of DNA out of the RuvA tetramer per ATP hydrolyzed, thus driving DNA branch migration. The RuvB motors rotate together with the DNA substrate, which together with the progressing nucleotide cycle form the mechanistic basis for DNA recombination by continuous HJ branch migration. Branch migration allows RuvC to scan DNA until it finds its consensus sequence, where it cleaves and resolves cruciform DNA. The chain is Holliday junction branch migration complex subunit RuvB from Thermus thermophilus (strain ATCC BAA-163 / DSM 7039 / HB27).